The primary structure comprises 65 residues: Large ribosomal subunit protein bL31 (65 aa).

Positions 16, 18, 36, and 39 each coordinate Zn(2+).

Belongs to the bacterial ribosomal protein bL31 family. Type A subfamily. As to quaternary structure, part of the 50S ribosomal subunit. Zn(2+) serves as cofactor.

In terms of biological role, binds the 23S rRNA. In Carboxydothermus hydrogenoformans (strain ATCC BAA-161 / DSM 6008 / Z-2901), this protein is Large ribosomal subunit protein bL31.